The sequence spans 532 residues: Exodeoxyribonuclease 7 large subunit (532 aa).

Residues 497-532 (AITTGEGTPAPETAAAPKKKPAKPASSDPGNQGNLF) form a disordered region. Positions 499-512 (TTGEGTPAPETAAA) are enriched in low complexity.

This sequence belongs to the XseA family. In terms of assembly, heterooligomer composed of large and small subunits.

The protein localises to the cytoplasm. The catalysed reaction is Exonucleolytic cleavage in either 5'- to 3'- or 3'- to 5'-direction to yield nucleoside 5'-phosphates.. Functionally, bidirectionally degrades single-stranded DNA into large acid-insoluble oligonucleotides, which are then degraded further into small acid-soluble oligonucleotides. This is Exodeoxyribonuclease 7 large subunit from Agrobacterium fabrum (strain C58 / ATCC 33970) (Agrobacterium tumefaciens (strain C58)).